Here is a 217-residue protein sequence, read N- to C-terminus: GRB2-related adapter protein (217 aa).

One can recognise an SH3 1 domain in the interval 1–58; sequence MESVALYSFQATESDELAFNKGDTLKILNMEDDQNWYKAELRGAEGFVPKNYIRLKPH. The SH2 domain occupies 60 to 152; sequence WYSGRISRQL…KRQVFLQDEE (93 aa). The region spanning 158–217 is the SH3 2 domain; it reads PRACFAQAQFDFSAQDPSQLSFRRGDIIEVLERLDPSWWRGRLSGRIGFFPRSYVQPVHM.

Belongs to the GRB2/sem-5/DRK family. As to quaternary structure, associates through its SH2 domain with ligand-activated receptors for stem cell factor (KIT) and erythropoietin (EPOR). Also forms a stable complex with the Bcr-Abl oncoprotein. GRAP is associated with the Ras guanine nucleotide exchange factor SOS1, primarily through its N-terminal SH3 domain. Interacts with phosphorylated LAT upon TCR activation. Interacts with SHB.

Its subcellular location is the membrane. The protein localises to the synapse. In terms of biological role, couples signals from receptor and cytoplasmic tyrosine kinases to the Ras signaling pathway. Plays a role in the inner ear and in hearing. The polypeptide is GRB2-related adapter protein (GRAP) (Bos taurus (Bovine)).